The primary structure comprises 187 residues: Crossover junction endodeoxyribonuclease RuvC (187 aa).

Catalysis depends on residues aspartate 7, glutamate 67, and aspartate 140. Residues aspartate 7, glutamate 67, and aspartate 140 each coordinate Mg(2+).

The protein belongs to the RuvC family. Homodimer which binds Holliday junction (HJ) DNA. The HJ becomes 2-fold symmetrical on binding to RuvC with unstacked arms; it has a different conformation from HJ DNA in complex with RuvA. In the full resolvosome a probable DNA-RuvA(4)-RuvB(12)-RuvC(2) complex forms which resolves the HJ. Mg(2+) is required as a cofactor.

It localises to the cytoplasm. The enzyme catalyses Endonucleolytic cleavage at a junction such as a reciprocal single-stranded crossover between two homologous DNA duplexes (Holliday junction).. In terms of biological role, the RuvA-RuvB-RuvC complex processes Holliday junction (HJ) DNA during genetic recombination and DNA repair. Endonuclease that resolves HJ intermediates. Cleaves cruciform DNA by making single-stranded nicks across the HJ at symmetrical positions within the homologous arms, yielding a 5'-phosphate and a 3'-hydroxyl group; requires a central core of homology in the junction. The consensus cleavage sequence is 5'-(A/T)TT(C/G)-3'. Cleavage occurs on the 3'-side of the TT dinucleotide at the point of strand exchange. HJ branch migration catalyzed by RuvA-RuvB allows RuvC to scan DNA until it finds its consensus sequence, where it cleaves and resolves the cruciform DNA. The polypeptide is Crossover junction endodeoxyribonuclease RuvC (Chlorobaculum parvum (strain DSM 263 / NCIMB 8327) (Chlorobium vibrioforme subsp. thiosulfatophilum)).